A 181-amino-acid chain; its full sequence is Protein AC41 (181 aa).

In terms of biological role, plays a role in late gene expression. In Autographa californica nuclear polyhedrosis virus (AcMNPV), this protein is Protein AC41 (AC41).